A 428-amino-acid polypeptide reads, in one-letter code: MPGIVVMGTQWGDEGKGKATDLMSERVDYCVRYSGGNNAGHTVVVGDEKFFMHLLPSGVLNPNSTAVLGNGVVLNLDVLADEIDALRGRGVDIPHPLISANAHLITPYHQTLDKVTERFLGSRRIGTTGRGIGPTYSDKINRMGIRVQDLFDESILRQKVEASLDQKNQILVKIYNRRAIDPGEVADGLLAHAERIRPYVVDVARVLNKGLDEGKVVLFEGAQAHHLDVDFGTYPYVTSSNPIAAGACTGSGVGPTRIDRIVGIAKAYTTRVGEGPFPTELCDDDGERLRSEGGEYGVTTKRPRRCGWFDALVVQQAVMINSVTDLFLTKLDVLTGWERIPVCVGYDIDGERTDIMPVTQSDLHHAKPVYEFLDGWSEDISTARSFDDLPRNCQAYVRRLEELVGTRVSGIGVGAGRDESVVINDLID.

Residues 12-18 (GDEGKGK) and 40-42 (GHT) contribute to the GTP site. Aspartate 13 acts as the Proton acceptor in catalysis. Mg(2+)-binding residues include aspartate 13 and glycine 40. IMP is bound by residues 13 to 16 (DEGK), 38 to 41 (NAGH), threonine 128, arginine 142, glutamine 223, threonine 238, and arginine 302. The Proton donor role is filled by histidine 41. 298-304 (VTTKRPR) lines the substrate pocket. GTP-binding positions include arginine 304, 330–332 (KLD), and 412–414 (GVG).

It belongs to the adenylosuccinate synthetase family. In terms of assembly, homodimer. It depends on Mg(2+) as a cofactor.

The protein resides in the cytoplasm. The catalysed reaction is IMP + L-aspartate + GTP = N(6)-(1,2-dicarboxyethyl)-AMP + GDP + phosphate + 2 H(+). The protein operates within purine metabolism; AMP biosynthesis via de novo pathway; AMP from IMP: step 1/2. Plays an important role in the de novo pathway of purine nucleotide biosynthesis. Catalyzes the first committed step in the biosynthesis of AMP from IMP. This Cutibacterium acnes (strain DSM 16379 / KPA171202) (Propionibacterium acnes) protein is Adenylosuccinate synthetase.